Consider the following 179-residue polypeptide: Large ribosomal subunit protein uL5 (179 aa).

Belongs to the universal ribosomal protein uL5 family. As to quaternary structure, part of the 50S ribosomal subunit; part of the 5S rRNA/L5/L18/L25 subcomplex. Contacts the 5S rRNA and the P site tRNA. Forms a bridge to the 30S subunit in the 70S ribosome.

Functionally, this is one of the proteins that bind and probably mediate the attachment of the 5S RNA into the large ribosomal subunit, where it forms part of the central protuberance. In the 70S ribosome it contacts protein S13 of the 30S subunit (bridge B1b), connecting the 2 subunits; this bridge is implicated in subunit movement. Contacts the P site tRNA; the 5S rRNA and some of its associated proteins might help stabilize positioning of ribosome-bound tRNAs. This is Large ribosomal subunit protein uL5 from Halalkalibacterium halodurans (strain ATCC BAA-125 / DSM 18197 / FERM 7344 / JCM 9153 / C-125) (Bacillus halodurans).